The following is a 173-amino-acid chain: Large ribosomal subunit protein bL9 (173 aa).

Belongs to the bacterial ribosomal protein bL9 family.

Functionally, binds to the 23S rRNA. The chain is Large ribosomal subunit protein bL9 from Chlamydia felis (strain Fe/C-56) (Chlamydophila felis).